Consider the following 605-residue polypeptide: Cystathionine gamma-synthase-like enzyme iboG1 (605 aa).

Y289 is a substrate binding site. K393 carries the N6-(pyridoxal phosphate)lysine modification.

This sequence belongs to the trans-sulfuration enzymes family. The cofactor is pyridoxal 5'-phosphate.

It participates in secondary metabolite biosynthesis. Its function is as follows. Cystathionine gamma-synthase-like enzyme; part of the gene cluster that mediates the biosynthesis of the psychoactive metabolites ibotenic acid and muscimol. The first committed step is glutamate hydroxylation by the 2-oxoglutarate-dependent dioxygenase iboH, and the last step is decarboxylation of ibotenic acid to muscimol by the decarboxylase iboD. The order of the intermediate reactions is somewhat ambiguous. IboA likely activates the carboxylic acid at position 5 to introduce an amide bond, and the flavin monooxygenase iboF generates the N-O bond. There are several options for the latter step. One option is that iboF directly hydroxylates the amide nitrogen formed by iboA to produce a hydroxamic acid species. Another option is that iboF hydroxylates an external N-containing compound, whose resulting N-O bond is subsequently introduced into the hydroxyglutamate scaffold. The paralogous PLP-dependent cystathionine gamma-synthase-like enzymes iboG1 and iboG2 are likely involved in substitution of the OH group at position 3 by the O-N moiety. The first cyclic intermediate is most probably tricholomic acid which is likely desaturated to ibotenic acid by the cytochrome P450 monooxygenase iboC. The polypeptide is Cystathionine gamma-synthase-like enzyme iboG1 (iboG1) (Amanita muscaria (strain Koide BX008)).